A 397-amino-acid polypeptide reads, in one-letter code: Lysophospholipid transporter LplT (397 aa).

At 1–17 (MSESVHTNTSLWSKGMK) the chain is on the periplasmic side. Residues 18–38 (AVIVAQFLSAFGDNALLFATL) form a helical membrane-spanning segment. The Cytoplasmic portion of the chain corresponds to 39 to 52 (ALLKAQFYPEWSQP). Residues 53-73 (ILQMVFVGAYILFAPFVGQVA) traverse the membrane as a helical segment. Residues 74 to 90 (DSFAKGRVMMFANGLKL) are Periplasmic-facing. The chain crosses the membrane as a helical span at residues 91 to 111 (LGAASICFGINPFLGYTLVGV). Over 112–144 (GAAAYSPAKYGILGELTTGSKLVKANGLMEAST) the chain is Cytoplasmic. Residues 145 to 165 (IAAILLGSVAGGVLADWHVLV) form a helical membrane-spanning segment. A166 is a topological domain (periplasmic). Residues 167 to 187 (LAACALAYGGAVVANIYIPKL) form a helical membrane-spanning segment. The Cytoplasmic segment spans residues 188–226 (AAARPGQSWNLINMTRSFLNACTSLWCNGETRFSLVGTS). A helical membrane pass occupies residues 227-247 (LFWGAGVTLRFLLVLWVPVAL). Over 248-256 (GITDNATPT) the chain is Periplasmic. A helical transmembrane segment spans residues 257–277 (YLNAMVAIGIVVGAGAAAKLV). The Cytoplasmic portion of the chain corresponds to 278–280 (TLE). Residues 281–301 (TVSRCMPAGILIGVVVLIFSL) traverse the membrane as a helical segment. Residues 302–304 (QHE) are Periplasmic-facing. A helical transmembrane segment spans residues 305-325 (LLPAYALLMLIGVLGGFFVVP). At 326–343 (LNALLQERGKKSVGAGNA) the chain is on the cytoplasmic side. The chain crosses the membrane as a helical span at residues 344–364 (IAVQNLGENSAMLLMLGIYSL). Topologically, residues 365 to 366 (AV) are periplasmic. The helical transmembrane segment at 367–387 (MVGIPVVPIGIGFGALFALAI) threads the bilayer. The Cytoplasmic portion of the chain corresponds to 388 to 397 (TALWIWQRRH).

This sequence belongs to the major facilitator superfamily. LplT (TC 2.A.1.42) family.

The protein localises to the cell inner membrane. In terms of biological role, catalyzes the facilitated diffusion of 2-acyl-glycero-3-phosphoethanolamine (2-acyl-GPE) into the cell. This is Lysophospholipid transporter LplT from Shigella dysenteriae serotype 1 (strain Sd197).